We begin with the raw amino-acid sequence, 131 residues long: Holo-[acyl-carrier-protein] synthase (131 aa).

Mg(2+) is bound by residues Asp-8 and Glu-59.

It belongs to the P-Pant transferase superfamily. AcpS family. Requires Mg(2+) as cofactor.

The protein localises to the cytoplasm. It catalyses the reaction apo-[ACP] + CoA = holo-[ACP] + adenosine 3',5'-bisphosphate + H(+). In terms of biological role, transfers the 4'-phosphopantetheine moiety from coenzyme A to a Ser of acyl-carrier-protein. The chain is Holo-[acyl-carrier-protein] synthase from Rickettsia massiliae (strain Mtu5).